We begin with the raw amino-acid sequence, 331 residues long: Aromatic 2-oxoacid reductase (331 aa).

NAD(+)-binding positions include 154-155, Asp175, 205-206, Asn211, 232-234, and Asp258; these read RI, AP, and AAR. The active site involves Arg234. Glu263 is a catalytic residue. His295 (proton donor) is an active-site residue.

It belongs to the D-isomer specific 2-hydroxyacid dehydrogenase family.

The enzyme catalyses (R)-3-phenyllactate + NAD(+) = 3-phenylpyruvate + NADH + H(+). It carries out the reaction (2R)-2-hydroxy-3-(4-hydroxyphenyl)propanoate + NAD(+) = 3-(4-hydroxyphenyl)pyruvate + NADH + H(+). It catalyses the reaction 3-(indol-3-yl)lactate + NAD(+) = indole-3-pyruvate + NADH + H(+). It functions in the pathway amino-acid degradation. Functionally, essential for the reductive metabolism of L-phenylalanine, L-tyrosine and L-tryptophan. Catalyzes the conversion of phenylpyruvic acid to phenyllactic acid, 4-hydroxy-phenylpyruvic acid to 4-hydroxy-phenyllactic acid, and indolepyruvic acid to indolelactic acid. This chain is Aromatic 2-oxoacid reductase, found in Clostridium sporogenes (strain ATCC 15579).